Reading from the N-terminus, the 296-residue chain is Glycine--tRNA ligase alpha subunit (296 aa).

It belongs to the class-II aminoacyl-tRNA synthetase family. As to quaternary structure, tetramer of two alpha and two beta subunits.

It localises to the cytoplasm. The catalysed reaction is tRNA(Gly) + glycine + ATP = glycyl-tRNA(Gly) + AMP + diphosphate. This Exiguobacterium sibiricum (strain DSM 17290 / CCUG 55495 / CIP 109462 / JCM 13490 / 255-15) protein is Glycine--tRNA ligase alpha subunit.